Here is a 74-residue protein sequence, read N- to C-terminus: ATP synthase subunit c (74 aa).

The next 2 helical transmembrane spans lie at 5–25 (LAHI…IGVG) and 49–69 (LFIG…VALL).

This sequence belongs to the ATPase C chain family. In terms of assembly, F-type ATPases have 2 components, F(1) - the catalytic core - and F(0) - the membrane proton channel. F(1) has five subunits: alpha(3), beta(3), gamma(1), delta(1), epsilon(1). F(0) has three main subunits: a(1), b(2) and c(10-14). The alpha and beta chains form an alternating ring which encloses part of the gamma chain. F(1) is attached to F(0) by a central stalk formed by the gamma and epsilon chains, while a peripheral stalk is formed by the delta and b chains.

Its subcellular location is the cell inner membrane. Functionally, f(1)F(0) ATP synthase produces ATP from ADP in the presence of a proton or sodium gradient. F-type ATPases consist of two structural domains, F(1) containing the extramembraneous catalytic core and F(0) containing the membrane proton channel, linked together by a central stalk and a peripheral stalk. During catalysis, ATP synthesis in the catalytic domain of F(1) is coupled via a rotary mechanism of the central stalk subunits to proton translocation. Its function is as follows. Key component of the F(0) channel; it plays a direct role in translocation across the membrane. A homomeric c-ring of between 10-14 subunits forms the central stalk rotor element with the F(1) delta and epsilon subunits. The polypeptide is ATP synthase subunit c (Ruegeria pomeroyi (strain ATCC 700808 / DSM 15171 / DSS-3) (Silicibacter pomeroyi)).